Here is a 1116-residue protein sequence, read N- to C-terminus: MAP kinase kinase kinase mkh1 (1116 aa).

Disordered stretches follow at residues 510–601 (LKMP…SNSL) and 618–647 (ALDE…ENHH). Residues 515–531 (NSGSSAPQSPSSNTSAS) show a composition bias toward low complexity. A compositionally biased stretch (basic residues) spans 553–569 (LRRKNTLTRRPSIRHAR). Low complexity predominate over residues 588-601 (SFDPKASSKSSNSL). A compositionally biased stretch (polar residues) spans 634–647 (PKQSSSQVPKENHH). The region spanning 825-1094 (WMKGELIGNG…AEELLNHPFM (270 aa)) is the Protein kinase domain. Residues 831 to 839 (IGNGTYGKV) and lysine 854 each bind ATP. Residue aspartate 955 is the Proton acceptor of the active site.

Belongs to the protein kinase superfamily. STE Ser/Thr protein kinase family. MAP kinase kinase kinase subfamily.

It carries out the reaction L-seryl-[protein] + ATP = O-phospho-L-seryl-[protein] + ADP + H(+). It catalyses the reaction L-threonyl-[protein] + ATP = O-phospho-L-threonyl-[protein] + ADP + H(+). Its function is as follows. May regulate cell morphology, cell wall integrity, salt resistance, cell cycle reentry from stationary-phase arrest, and filamentous growth in response to stress. Activates the MAP kinase kinase skh1/pek1 by phosphorylation. The polypeptide is MAP kinase kinase kinase mkh1 (mkh1) (Schizosaccharomyces pombe (strain 972 / ATCC 24843) (Fission yeast)).